A 301-amino-acid chain; its full sequence is Chitosanase (301 aa).

Positions 1–42 (MHMSNARPSKSRTKFLLAFLCFTLMASLFGATALFGPSKAAA) are cleaved as a signal peptide. E79 serves as the catalytic Proton donor. C92 and C166 are disulfide-bonded. D97 acts as the Nucleophile in catalysis.

This sequence belongs to the glycosyl hydrolase 46 family.

It localises to the secreted. It carries out the reaction Endohydrolysis of beta-(1-&gt;4)-linkages between D-glucosamine residues in a partly acetylated chitosan.. In terms of biological role, aids in the defense against invading fungal pathogens by degrading their cell wall chitosan. The chain is Chitosanase (csn) from Niallia circulans (Bacillus circulans).